The chain runs to 79 residues: Large ribosomal subunit protein uL30 (79 aa).

Belongs to the universal ribosomal protein uL30 family. As to quaternary structure, part of the 50S ribosomal subunit.

This is Large ribosomal subunit protein uL30 from Anaeromyxobacter sp. (strain Fw109-5).